Consider the following 354-residue polypeptide: Peptide chain release factor 1 (354 aa).

An N5-methylglutamine modification is found at Gln-233.

The protein belongs to the prokaryotic/mitochondrial release factor family. Post-translationally, methylated by PrmC. Methylation increases the termination efficiency of RF1.

It is found in the cytoplasm. In terms of biological role, peptide chain release factor 1 directs the termination of translation in response to the peptide chain termination codons UAG and UAA. In Clostridioides difficile (strain 630) (Peptoclostridium difficile), this protein is Peptide chain release factor 1.